The primary structure comprises 514 residues: Uridylate cyclase (514 aa).

2 consecutive Guanylate cyclase domains span residues 49 to 190 (VHMY…AKLA) and 286 to 428 (VSLY…EKRQ). A ribonucleoside 5'-triphosphate is bound by residues Y52, R105, F178, 184 to 188 (NHAAK), and 291 to 296 (DIDGFT). Ca(2+) contacts are provided by D291, I292, and D339. D291 serves as a coordination point for Mn(2+). Positions 495 to 514 (IRADERQVQPHSRQKVDGSR) are disordered. Over residues 496 to 514 (RADERQVQPHSRQKVDGSR) the composition is skewed to basic and acidic residues.

The protein belongs to the adenylyl cyclase class-4/guanylyl cyclase family. Pyrimidine cyclase subfamily. In terms of assembly, monomer. Requires a divalent metal cation as cofactor.

Its subcellular location is the cytoplasm. The enzyme catalyses UTP = 3',5'-cyclic UMP + diphosphate. Pycsar (pyrimidine cyclase system for antiphage resistance) provides immunity against bacteriophage. The pyrimidine cyclase (PycC) synthesizes cyclic nucleotides in response to infection; these serve as specific second messenger signals. The signals activate the adjacent effector, leading to bacterial cell death and abortive phage infection. A clade A Pycsar system. In terms of biological role, the pyrimidine cyclase gene of a two-gene Pycsar system, generates cyclic UMP (cUMP) from UTP, has little to no activity on ATP, CTP or GTP. Expression of this and adjacent effector PaPycTIR (AC P0DV41) probably confers resistance to bacteriophage. The genes are probably only expressed in response to bacteriophage infection. Does not have adenylyl or guanylyl cyclase activity. This Pseudomonas aeruginosa protein is Uridylate cyclase.